Here is a 502-residue protein sequence, read N- to C-terminus: Bone morphogenetic protein receptor type-1B (502 aa).

Over residues 1-10 (MPLLSSSKLS) the composition is skewed to polar residues. A signal peptide spans 1–13 (MPLLSSSKLSMES). Positions 1-27 (MPLLSSSKLSMESRKEDSEGTAPAPPQ) are disordered. Residues 14–126 (RKEDSEGTAP…DFAEGNIHHK (113 aa)) are Extracellular-facing. 5 disulfides stabilise this stretch: cysteine 32–cysteine 53, cysteine 34–cysteine 38, cysteine 47–cysteine 71, cysteine 81–cysteine 95, and cysteine 96–cysteine 102. Residue asparagine 44 is glycosylated (N-linked (GlcNAc...) asparagine). Residues 127-148 (ALLISVTVCSILLVLIIIFCYF) form a helical membrane-spanning segment. Over 149–502 (RYKRQEARPR…KMSESQDIKL (354 aa)) the chain is Cytoplasmic. The 30-residue stretch at 174-203 (ESLKDLIEQSQSSGSGSGLPLLVQRTIAKQ) folds into the GS domain. The Protein kinase domain occupies 204-494 (IQMVKQIGKG…LRVKKTLAKM (291 aa)). Residues 210 to 218 (IGKGRYGEV) and lysine 231 contribute to the ATP site. Aspartate 332 serves as the catalytic Proton acceptor.

Belongs to the protein kinase superfamily. TKL Ser/Thr protein kinase family. TGFB receptor subfamily. Mg(2+) serves as cofactor. Mn(2+) is required as a cofactor. In terms of processing, autophosphorylated.

The protein localises to the cell membrane. The catalysed reaction is L-threonyl-[receptor-protein] + ATP = O-phospho-L-threonyl-[receptor-protein] + ADP + H(+). The enzyme catalyses L-seryl-[receptor-protein] + ATP = O-phospho-L-seryl-[receptor-protein] + ADP + H(+). In terms of biological role, on ligand binding, forms a receptor complex consisting of two type II and two type I transmembrane serine/threonine kinases. Type II receptors phosphorylate and activate type I receptors which autophosphorylate, then bind and activate SMAD transcription. Positively regulates chondrocyte differentiation. This chain is Bone morphogenetic protein receptor type-1B (BMPR1B), found in Gallus gallus (Chicken).